Reading from the N-terminus, the 214-residue chain is tRNA (guanine-N(7)-)-methyltransferase (214 aa).

Positions 35, 60, 87, and 113 each coordinate S-adenosyl-L-methionine. Residue Asp-113 is part of the active site. Residues Lys-117 and Asp-149 each coordinate substrate.

Belongs to the class I-like SAM-binding methyltransferase superfamily. TrmB family.

It carries out the reaction guanosine(46) in tRNA + S-adenosyl-L-methionine = N(7)-methylguanosine(46) in tRNA + S-adenosyl-L-homocysteine. It participates in tRNA modification; N(7)-methylguanine-tRNA biosynthesis. Functionally, catalyzes the formation of N(7)-methylguanine at position 46 (m7G46) in tRNA. This chain is tRNA (guanine-N(7)-)-methyltransferase, found in Prochlorococcus marinus (strain NATL2A).